The primary structure comprises 385 residues: Protein kup-1 (385 aa).

Disordered stretches follow at residues 1–20 and 326–385; these read MDDE…VRED and SLAS…PDEY. Composition is skewed to basic and acidic residues over residues 8 to 20, 339 to 351, and 364 to 385; these read GSDH…VRED, RTDE…DDIV, and GRVE…PDEY.

The sequence is that of Protein kup-1 (kup-1) from Caenorhabditis elegans.